The primary structure comprises 183 residues: Bifunctional protein PyrR (183 aa).

The PRPP-binding signature appears at 102–114 (VVLVDDVLFSGRT).

This sequence belongs to the purine/pyrimidine phosphoribosyltransferase family. PyrR subfamily.

It carries out the reaction UMP + diphosphate = 5-phospho-alpha-D-ribose 1-diphosphate + uracil. Functionally, regulates the transcription of the pyrimidine nucleotide (pyr) operon in response to exogenous pyrimidines. In terms of biological role, also displays a weak uracil phosphoribosyltransferase activity which is not physiologically significant. The protein is Bifunctional protein PyrR of Leifsonia xyli subsp. xyli (strain CTCB07).